A 681-amino-acid polypeptide reads, in one-letter code: Transketolase 2 (681 aa).

Substrate is bound at residue His30. Thiamine diphosphate-binding positions include His69 and 116–118 (GPL). Asp157 contributes to the Mg(2+) binding site. Thiamine diphosphate contacts are provided by Gly158 and Asn187. Residues Asn187 and Ile189 each contribute to the Mg(2+) site. The substrate site is built by His263, Arg359, and Ser386. His263 contacts thiamine diphosphate. Thiamine diphosphate contacts are provided by Glu418 and Phe445. Catalysis depends on Glu418, which acts as the Proton donor. Substrate is bound by residues His469, Asp477, and Arg528.

This sequence belongs to the transketolase family. Homodimer. It depends on Mg(2+) as a cofactor. Ca(2+) serves as cofactor. The cofactor is Mn(2+). Requires Co(2+) as cofactor. Thiamine diphosphate is required as a cofactor.

It catalyses the reaction D-sedoheptulose 7-phosphate + D-glyceraldehyde 3-phosphate = aldehydo-D-ribose 5-phosphate + D-xylulose 5-phosphate. Its function is as follows. Catalyzes the transfer of a two-carbon ketol group from a ketose donor to an aldose acceptor, via a covalent intermediate with the cofactor thiamine pyrophosphate. This chain is Transketolase 2 (TKL2), found in Saccharomyces cerevisiae (strain ATCC 204508 / S288c) (Baker's yeast).